The chain runs to 1067 residues: Carbamoyl phosphate synthase large chain (1067 aa).

The carboxyphosphate synthetic domain stretch occupies residues M1 to E401. ATP-binding residues include R129, R169, G175, G176, K208, V210, E215, G241, I242, H243, Q284, and E298. Residues R133–L327 enclose the ATP-grasp 1 domain. Residues Q284, E298, and N300 each contribute to the Mg(2+) site. Q284, E298, and N300 together coordinate Mn(2+). The segment at I402–V549 is oligomerization domain. The carbamoyl phosphate synthetic domain stretch occupies residues V550–S932. Residues D674 to L864 enclose the ATP-grasp 2 domain. ATP is bound by residues R710, K749, L751, E755, G780, V781, H782, S783, Q823, and E835. 3 residues coordinate Mg(2+): Q823, E835, and N837. Residues Q823, E835, and N837 each contribute to the Mn(2+) site. An MGS-like domain is found at M933–I1067. The allosteric domain stretch occupies residues M933 to I1067.

Belongs to the CarB family. In terms of assembly, composed of two chains; the small (or glutamine) chain promotes the hydrolysis of glutamine to ammonia, which is used by the large (or ammonia) chain to synthesize carbamoyl phosphate. Tetramer of heterodimers (alpha,beta)4. Mg(2+) serves as cofactor. Mn(2+) is required as a cofactor.

It catalyses the reaction hydrogencarbonate + L-glutamine + 2 ATP + H2O = carbamoyl phosphate + L-glutamate + 2 ADP + phosphate + 2 H(+). The catalysed reaction is hydrogencarbonate + NH4(+) + 2 ATP = carbamoyl phosphate + 2 ADP + phosphate + 2 H(+). Its pathway is amino-acid biosynthesis; L-arginine biosynthesis; carbamoyl phosphate from bicarbonate: step 1/1. The protein operates within pyrimidine metabolism; UMP biosynthesis via de novo pathway; (S)-dihydroorotate from bicarbonate: step 1/3. Its function is as follows. Large subunit of the glutamine-dependent carbamoyl phosphate synthetase (CPSase). CPSase catalyzes the formation of carbamoyl phosphate from the ammonia moiety of glutamine, carbonate, and phosphate donated by ATP, constituting the first step of 2 biosynthetic pathways, one leading to arginine and/or urea and the other to pyrimidine nucleotides. The large subunit (synthetase) binds the substrates ammonia (free or transferred from glutamine from the small subunit), hydrogencarbonate and ATP and carries out an ATP-coupled ligase reaction, activating hydrogencarbonate by forming carboxy phosphate which reacts with ammonia to form carbamoyl phosphate. The sequence is that of Carbamoyl phosphate synthase large chain from Clostridium perfringens (strain SM101 / Type A).